We begin with the raw amino-acid sequence, 238 residues long: Small ribosomal subunit protein uS2 (238 aa).

This sequence belongs to the universal ribosomal protein uS2 family.

In Prochlorococcus marinus (strain SARG / CCMP1375 / SS120), this protein is Small ribosomal subunit protein uS2.